The sequence spans 251 residues: Diphthine synthase (251 aa).

Residues Leu9, Asp85, Val88, 113 to 114 (SI), Leu165, Ala202, and His227 each bind S-adenosyl-L-methionine.

This sequence belongs to the diphthine synthase family. In terms of assembly, homodimer.

It carries out the reaction 2-[(3S)-amino-3-carboxypropyl]-L-histidyl-[translation elongation factor 2] + 3 S-adenosyl-L-methionine = diphthine-[translation elongation factor 2] + 3 S-adenosyl-L-homocysteine + 3 H(+). The protein operates within protein modification; peptidyl-diphthamide biosynthesis. S-adenosyl-L-methionine-dependent methyltransferase that catalyzes the trimethylation of the amino group of the modified target histidine residue in translation elongation factor 2 (EF-2), to form an intermediate called diphthine. The three successive methylation reactions represent the second step of diphthamide biosynthesis. The sequence is that of Diphthine synthase from Methanosphaerula palustris (strain ATCC BAA-1556 / DSM 19958 / E1-9c).